A 754-amino-acid chain; its full sequence is ToMV susceptible protein tm-1(GCR26) (754 aa).

Positions 1 to 201 (MATAQSNSPR…AGMVIGRLES (201 aa)) are N-terminal inhibitory domain NN. ATP is bound by residues 18 to 20 (DTK), threonine 55, arginine 92, and 124 to 127 (GSGG). Positions 211–431 (KFTVGVTMFG…VDSFLEMSPK (221 aa)) are N-terminal inhibitory domain NC.

Belongs to the UPF0261 family. As to quaternary structure, homodimer. (Microbial infection) Binds, via an ATP bridge, to the tobamoviruses avirulent (Avr) replication proteins (large and small subunits, e.g. tobacco mild green mosaic virus (TMGMV) AC P18339 and pepper mild mottle virus (PMMoV) AC P89657) to inhibit their function after the translation of tobamoviruses RNA, but before the viral replication complex formation on the membrane surfaces; this interaction is not possible with resistance-breaking strains replication proteins.

Functionally, inhibitor of viral RNA replication which confers resistance to some tobamoviruses including tobacco mild green mosaic virus (TMGMV) and pepper mild mottle virus (PMMoV), but not to tomato mosaic virus (ToMV strains L, ToMV0 and ToMV1-2) and tobacco mosaic virus (TMV). Prevents tobamoviruses RNA replication by affecting the association of tobamoviruses replication proteins (large and small subunits) with host membrane-associated proteins (e.g. TOM1, TOM2A and ARL8), thus inhibiting the replication complex formation on the membranes and avoiding viral negative-strand RNA synthesis. This chain is ToMV susceptible protein tm-1(GCR26), found in Solanum lycopersicum (Tomato).